The sequence spans 8515 residues: Nonribosomal peptide synthetase 8 (8515 aa).

2 adenylation regions span residues 59–736 (REHH…YRCS) and 1163–1705 (AKLS…EWVE). A condensation 1 region spans residues 587–1159 (RRVVQWLENL…TVGEVALVGD (573 aa)). Residues 615–691 (EPETAMERRL…ELAPRVKVAE (77 aa)) form the Carrier 1 domain. O-(pantetheine 4'-phosphoryl)serine is present on Ser652. The region spanning 1732–1808 (RGLTPTETVI…KLGRHADHSS (77 aa)) is the Carrier 2 domain. Ser1769 bears the O-(pantetheine 4'-phosphoryl)serine mark. Residues 1830-2273 (LSPIQQWFFE…TLYDCPLAAL (444 aa)) form an epimerase 1 region. The interval 2301 to 2709 (SHIQEGILLS…RSPEAVLHDL (409 aa)) is condensation 2. An adenylation 3 region spans residues 2733–3266 (QCLHWLIEQW…RMILSWLSEP (534 aa)). The Carrier 3 domain maps to 3286-3362 (TTLGPVEKQM…KVTPRTISLS (77 aa)). O-(pantetheine 4'-phosphoryl)serine is present on Ser3323. The segment at 3406–3819 (SPMQEGILLA…DNSGCSVKTV (414 aa)) is condensation 3. Residues 3857 to 3933 (EPTNLIALTV…EVFEHARFSD (77 aa)) enclose the Carrier 4 domain. Residue Ser3894 is modified to O-(pantetheine 4'-phosphoryl)serine. The epimerase 2 stretch occupies residues 3953–4392 (LSPIQKLHFH…TPSDFQLLSL (440 aa)). The tract at residues 4420–4823 (PCSPMQEGIL…ARPRARLGTI (404 aa)) is condensation 4. An adenylation 4 region spans residues 4837–5363 (WNEQARRPVV…RKVNKWLESF (527 aa)). The Carrier 5 domain maps to 5385–5461 (PPLTPIQQTI…SLAACATAII (77 aa)). At Ser5422 the chain carries O-(pantetheine 4'-phosphoryl)serine. A condensation 5 region spans residues 5508 to 5923 (SPMQEGILFS…SLVDHLSLCS (416 aa)). Residues 5941-6459 (ELRQCLHELI…GKVDRQALRR (519 aa)) are adenylation 5. In terms of domain architecture, Carrier 6 spans 6482-6558 (PISTAEEQQM…DLATLLESPA (77 aa)). At Ser6519 the chain carries O-(pantetheine 4'-phosphoryl)serine. Positions 6606-6992 (CTPLQESLMA…SQMKSVMGTL (387 aa)) are condensation 6. The interval 7030-7544 (VEDLIISRAQ…SSGKLARKGV (515 aa)) is adenylation 6. In terms of domain architecture, Carrier 7 spans 7575–7651 (IASSSVERAI…HLASREDLTA (77 aa)). At Ser7612 the chain carries O-(pantetheine 4'-phosphoryl)serine. The interval 7670-8119 (LTPIQRFFFC…DYPRARLDYT (450 aa)) is epimerase 3. A condensation 7 region spans residues 8164 to 8504 (HFIWKIAGTK…DPTSPLQFAD (341 aa)). Over residues 8488–8500 (AVNSVSSDPTSPL) the composition is skewed to polar residues. The disordered stretch occupies residues 8488-8515 (AVNSVSSDPTSPLQFADGQDPMPVSHQP).

It belongs to the NRP synthetase family.

Its function is as follows. Nonribosomal peptide synthesis (NRPS) is a key mechanism responsible for the biosynthesis of bioactive metabolites which are potentially contributing to organismal virulence. However, contarary to other nonribosomal peptide synthases, NRPS8 does not encode a secreted peptide, but has more a structural role since it is involved in germ tube formation. The sequence is that of Nonribosomal peptide synthetase 8 (NRPS8) from Aspergillus fumigatus (strain ATCC MYA-4609 / CBS 101355 / FGSC A1100 / Af293) (Neosartorya fumigata).